Reading from the N-terminus, the 1377-residue chain is Zinc finger MYM-type protein 2 (1377 aa).

Glycyl lysine isopeptide (Lys-Gly) (interchain with G-Cter in SUMO2) cross-links involve residues Lys-48, Lys-88, Lys-98, and Lys-104. Polar residues-rich tracts occupy residues 85–115 (TSSK…SVSE) and 127–138 (TNQGQEKNSSNF). Positions 85 to 177 (TSSKNEELQG…GMGNSGITTE (93 aa)) are disordered. A compositionally biased stretch (basic and acidic residues) spans 139–152 (IERRPPETKNRTND). Lys-147 participates in a covalent cross-link: Glycyl lysine isopeptide (Lys-Gly) (interchain with G-Cter in SUMO2). Residues 153-164 (VDFSTSSFSRSK) are compositionally biased toward polar residues. A Phosphoserine modification is found at Ser-159. Glycyl lysine isopeptide (Lys-Gly) (interchain with G-Cter in SUMO2) cross-links involve residues Lys-253 and Lys-297. The segment at 273-305 (NGESATHHNPDSWISQSASFPRNQKQPGVDSLS) is disordered. A compositionally biased stretch (polar residues) spans 284-298 (SWISQSASFPRNQKQ). The residue at position 305 (Ser-305) is a Phosphoserine. Residues Lys-312, Lys-325, Lys-348, and Lys-366 each participate in a glycyl lysine isopeptide (Lys-Gly) (interchain with G-Cter in SUMO2) cross-link. Residues 327 to 363 (VKVTCANCKKPLQKGQTAYQRKGSAHLFCSTTCLSSF) form an MYM-type 1 zinc finger. An MYM-type 2 zinc finger spans residues 369-409 (PKKLCVMCKKDITTMKGTIVAQVDSSESFQEFCSTSCLSLY). Glycyl lysine isopeptide (Lys-Gly) (interchain with G-Cter in SUMO2) cross-links involve residues Lys-417, Lys-441, Lys-491, Lys-503, Lys-513, Lys-529, and Lys-532. 2 MYM-type zinc fingers span residues 421–456 (NKSR…FNRY) and 463–502 (IMNC…VSEY). The segment at 533–570 (LTTCTGCRTQCRFFDMTQCIGPNGYMEPYCSTACMNSH) adopts an MYM-type 5 zinc-finger fold. Residues Lys-576, Lys-603, Lys-649, Lys-658, Lys-688, Lys-700, and Lys-709 each participate in a glycyl lysine isopeptide (Lys-Gly) (interchain with G-Cter in SUMO2) cross-link. The MYM-type 6 zinc finger occupies 636 to 671 (QLKCNYCKNSFCSKPEILEWENKVHQFCSKTCSDDY). 2 consecutive MYM-type zinc fingers follow at residues 723-758 (RCVT…CKKF) and 764-799 (KAAR…LLRF). Residues Lys-764, Lys-788, Lys-812, and Lys-829 each participate in a glycyl lysine isopeptide (Lys-Gly) (interchain with G-Cter in SUMO2) cross-link. Phosphoserine is present on residues Ser-838 and Ser-958. Disordered stretches follow at residues 983–1002 (LLKN…PYEP) and 1028–1064 (VFGE…SDNS). A compositionally biased stretch (basic residues) spans 1039 to 1050 (PRSKKKGAKRKA). The residue at position 1064 (Ser-1064) is a Phosphoserine. Residue Thr-1376 is modified to Phosphothreonine.

As to quaternary structure, can form homodimers. May be a component of a BHC histone deacetylase complex that contains HDAC1, HDAC2, HMG20B/BRAF35, KDM1A, RCOR1/CoREST, PHF21A/BHC80, ZMYM2, ZNF217, ZMYM3, GSE1 and GTF2I. Interacts with FOXP1 and FOXP2.

The protein localises to the nucleus. Functionally, involved in the negative regulation of transcription. This chain is Zinc finger MYM-type protein 2 (ZMYM2), found in Homo sapiens (Human).